A 1040-amino-acid chain; its full sequence is Contactin-2 (1040 aa).

A signal peptide spans 1–30 (MGTATRRKPHLLLVAAVALVSSSAWSSALG). Ig-like C2-type domains lie at 43 to 128 (PLSV…AILR), 133 to 222 (QEFS…SVFS), 239 to 322 (PSIK…GRII), 327 to 411 (PEWL…AELA), 417 to 504 (PDFR…GILS), and 509 to 603 (TKIT…ATVL). 4 cysteine pairs are disulfide-bonded: Cys61/Cys111, Cys155/Cys207, Cys261/Cys306, and Cys348/Cys395. N-linked (GlcNAc...) asparagine glycans are attached at residues Asn76, Asn198, and Asn204. Residues Asn461, Asn477, Asn498, and Asn525 are each glycosylated (N-linked (GlcNAc...) asparagine). 4 consecutive Fibronectin type-III domains span residues 610–708 (PPGG…TREA), 713–810 (APSG…SAEE), 815–910 (APTK…TMKP), and 915–1006 (PPGN…NGGT). The segment at 694–720 (GEPSGPSSKIRTREAAPSVAPSGLSGG) is disordered. A Cell attachment site motif is present at residues 794–796 (RGD). 4 N-linked (GlcNAc...) asparagine glycosylation sites follow: Asn830, Asn904, Asn918, and Asn940. Residues 894 to 919 (AGTGPASPSANATTMKPPPRRPPGNI) are disordered. Asn1012 carries the GPI-anchor amidated asparagine lipid modification. A propeptide spans 1013–1040 (MAVRPAPHPGTVISHSVAMLILIGSLEL) (removed in mature form).

It belongs to the immunoglobulin superfamily. Contactin family.

The protein resides in the cell membrane. Functionally, in conjunction with another transmembrane protein, CNTNAP2, contributes to the organization of axonal domains at nodes of Ranvier by maintaining voltage-gated potassium channels at the juxtaparanodal region. May be involved in cell adhesion. The sequence is that of Contactin-2 (CNTN2) from Homo sapiens (Human).